The sequence spans 312 residues: Ribose-phosphate pyrophosphokinase (312 aa).

ATP is bound by residues 38–40 and 97–98; these read DGE and RQ. Mg(2+) contacts are provided by H131 and D170. K193 is an active-site residue. Residues R195, D219, and 223-227 each bind D-ribose 5-phosphate; that span reads DTAGT.

The protein belongs to the ribose-phosphate pyrophosphokinase family. Class I subfamily. Homohexamer. Mg(2+) serves as cofactor.

It localises to the cytoplasm. The enzyme catalyses D-ribose 5-phosphate + ATP = 5-phospho-alpha-D-ribose 1-diphosphate + AMP + H(+). Its pathway is metabolic intermediate biosynthesis; 5-phospho-alpha-D-ribose 1-diphosphate biosynthesis; 5-phospho-alpha-D-ribose 1-diphosphate from D-ribose 5-phosphate (route I): step 1/1. In terms of biological role, involved in the biosynthesis of the central metabolite phospho-alpha-D-ribosyl-1-pyrophosphate (PRPP) via the transfer of pyrophosphoryl group from ATP to 1-hydroxyl of ribose-5-phosphate (Rib-5-P). This is Ribose-phosphate pyrophosphokinase from Leptospira interrogans serogroup Icterohaemorrhagiae serovar copenhageni (strain Fiocruz L1-130).